The primary structure comprises 272 residues: Tryptophan synthase alpha chain (272 aa).

Active-site proton acceptor residues include glutamate 53 and aspartate 64.

This sequence belongs to the TrpA family. In terms of assembly, tetramer of two alpha and two beta chains.

The enzyme catalyses (1S,2R)-1-C-(indol-3-yl)glycerol 3-phosphate + L-serine = D-glyceraldehyde 3-phosphate + L-tryptophan + H2O. The protein operates within amino-acid biosynthesis; L-tryptophan biosynthesis; L-tryptophan from chorismate: step 5/5. In terms of biological role, the alpha subunit is responsible for the aldol cleavage of indoleglycerol phosphate to indole and glyceraldehyde 3-phosphate. The polypeptide is Tryptophan synthase alpha chain (Xanthomonas campestris pv. campestris (strain B100)).